We begin with the raw amino-acid sequence, 302 residues long: tRNA pseudouridine synthase B (302 aa).

Asp45 acts as the Nucleophile in catalysis.

It belongs to the pseudouridine synthase TruB family. Type 1 subfamily.

The catalysed reaction is uridine(55) in tRNA = pseudouridine(55) in tRNA. In terms of biological role, responsible for synthesis of pseudouridine from uracil-55 in the psi GC loop of transfer RNAs. The polypeptide is tRNA pseudouridine synthase B (Francisella tularensis subsp. novicida (strain U112)).